The primary structure comprises 192 residues: dTTP/UTP pyrophosphatase (192 aa).

Residue D71 is the Proton acceptor of the active site.

This sequence belongs to the Maf family. YhdE subfamily. A divalent metal cation serves as cofactor.

Its subcellular location is the cytoplasm. The enzyme catalyses dTTP + H2O = dTMP + diphosphate + H(+). The catalysed reaction is UTP + H2O = UMP + diphosphate + H(+). In terms of biological role, nucleoside triphosphate pyrophosphatase that hydrolyzes dTTP and UTP. May have a dual role in cell division arrest and in preventing the incorporation of modified nucleotides into cellular nucleic acids. This chain is dTTP/UTP pyrophosphatase, found in Clostridium kluyveri (strain NBRC 12016).